A 306-amino-acid chain; its full sequence is Putative beta-lactamase HcpD (306 aa).

The signal sequence occupies residues 1-25 (MIKSWTKKWFLILFLMASCSSYLVA). TPR repeat units follow at residues 28-61 (GEKY…RVGV), 96-133 (HLAC…KGGV), 168-205 (GISC…KDGA), and 240-277 (GSGC…GFSG). 7 disulfides stabilise this stretch: cysteine 55–cysteine 63, cysteine 91–cysteine 99, cysteine 127–cysteine 135, cysteine 163–cysteine 171, cysteine 199–cysteine 207, cysteine 235–cysteine 243, and cysteine 271–cysteine 279.

This sequence belongs to the hcp beta-lactamase family.

The protein resides in the secreted. It carries out the reaction a beta-lactam + H2O = a substituted beta-amino acid. Functionally, may hydrolyze 6-aminopenicillinic acid and 7-aminocephalosporanic acid (ACA) derivatives. Binds to penicillin. The chain is Putative beta-lactamase HcpD (hcpD) from Helicobacter pylori (strain ATCC 700392 / 26695) (Campylobacter pylori).